Here is a 213-residue protein sequence, read N- to C-terminus: MKDKQFAIPKATAKRLSLYYRIFKRFHAEKIERANSKQIAEAIGIDSATVRRDFSYFGELGRRGFGYDVKKLMTFFADLLNDNSITNVMLVGIGNMGHALLHYRFHERNKMKIIMAFDLDDHPEVGTQTPDGIPIYGISQIKDKIKDADVKTAILTVPSVKSQEVANLLVDAGVKGILSFSPVHLHLPKDVVVQYVDLTSELQTLLYFMRKED.

Positions leucine 18–phenylalanine 57 form a DNA-binding region, H-T-H motif. NAD(+) is bound at residue glycine 92–glycine 97.

It belongs to the transcriptional regulatory Rex family. Homodimer.

Its subcellular location is the cytoplasm. Functionally, modulates transcription in response to changes in cellular NADH/NAD(+) redox state. Binds to the promoter of the aldehyde-alcohol dehydrogenase adhE gene. Functions as a redox-dependent repressor of adhE expression. This Streptococcus pneumoniae serotype 19F (strain G54) protein is Redox-sensing transcriptional repressor Rex.